Reading from the N-terminus, the 105-residue chain is Small ribosomal subunit protein uS17 (105 aa).

This sequence belongs to the universal ribosomal protein uS17 family. Part of the 30S ribosomal subunit.

Its function is as follows. One of the primary rRNA binding proteins, it binds specifically to the 5'-end of 16S ribosomal RNA. The protein is Small ribosomal subunit protein uS17 of Thermus thermophilus (strain ATCC BAA-163 / DSM 7039 / HB27).